Here is a 446-residue protein sequence, read N- to C-terminus: Histidine--tRNA ligase (446 aa).

This sequence belongs to the class-II aminoacyl-tRNA synthetase family. As to quaternary structure, homodimer.

The protein resides in the cytoplasm. The enzyme catalyses tRNA(His) + L-histidine + ATP = L-histidyl-tRNA(His) + AMP + diphosphate + H(+). The protein is Histidine--tRNA ligase of Burkholderia cenocepacia (strain ATCC BAA-245 / DSM 16553 / LMG 16656 / NCTC 13227 / J2315 / CF5610) (Burkholderia cepacia (strain J2315)).